Consider the following 529-residue polypeptide: DNA polymerase lambda (529 aa).

A BRCT domain is found at Asp-14 to Leu-109. A disordered region spans residues Pro-119–Asp-199. A compositionally biased stretch (polar residues) spans Ser-153 to Ser-175. Residues Glu-182–Ser-193 are compositionally biased toward low complexity. The tract at residues Asn-213 to Tyr-227 is DNA-binding. His-260 is a catalytic residue. Residues Gly-295–Thr-298 form a DNA-binding region. Residues Arg-336, Ser-367–Arg-370, and Gly-376–Asp-379 each bind dCTP. The interval Arg-370 to Asp-379 is involved in primer binding. Mn(2+)-binding residues include Asp-377, Asp-379, and Asp-444. Residues Glu-418–Ala-459 form a DNA-binding region. Asn-467 contributes to the dCTP binding site.

Belongs to the DNA polymerase type-X family. Interacts with the DNA repair proteins XRCC4 and LIG4. Interacts with HSP90-1. Mn(2+) is required as a cofactor.

The protein resides in the nucleus. It catalyses the reaction DNA(n) + a 2'-deoxyribonucleoside 5'-triphosphate = DNA(n+1) + diphosphate. Functionally, repair polymerase involved in base excision repair (BER) and responsible for repair of lesions that give rise to abasic (AP) sites in DNA. Has both DNA polymerase and terminal transferase activities. Has a 5'-deoxyribose-5-phosphate lyase (dRP lyase) activity. Involved in the repair of transposon-induced DNA double strand breaks (DSBs). Involved in repair of UV-B-mediated DNA damage during seedling development through an excision repair mechanism. Involved the repair of DSBs induced by high salinity and DNA cross-linking agent. Functions via the DNA non-homologous end joining (NHEJ) pathway. In Arabidopsis thaliana (Mouse-ear cress), this protein is DNA polymerase lambda.